We begin with the raw amino-acid sequence, 920 residues long: Glutamate receptor 2.2 (920 aa).

Positions 1-24 (MKNSKLFFRFLFLFFFFCLESSRG) are cleaved as a signal peptide. At 25–580 (QDNGKTQVNI…DKFSFLKPLS (556 aa)) the chain is on the extracellular side. Residues asparagine 53, asparagine 204, asparagine 267, asparagine 331, asparagine 342, asparagine 477, and asparagine 542 are each glycosylated (N-linked (GlcNAc...) asparagine). The chain crosses the membrane as a helical span at residues 581–601 (IELWLTTLVFFFLVGISVWTL). Residues 602–610 (EHRVNSDFR) lie on the Cytoplasmic side of the membrane. A helical transmembrane segment spans residues 611-631 (GPANYQASTIFWFAFSTMVFA). The Cytoplasmic portion of the chain corresponds to 632 to 635 (PRER). A helical membrane pass occupies residues 636 to 656 (VLSFGARSLVVTWYFVLLVLT). Residues 657–830 (QSYTASLASL…VTAIQLGVGS (174 aa)) are Extracellular-facing. The N-linked (GlcNAc...) asparagine glycan is linked to asparagine 702. A helical transmembrane segment spans residues 831 to 851 (FWFLFLVVFVVCVLALGKFTF). Topologically, residues 852 to 920 (CFLWKTKGKD…QVNQTDPDCL (69 aa)) are cytoplasmic.

The protein belongs to the glutamate-gated ion channel (TC 1.A.10.1) family. As to quaternary structure, may form heteromers. Expressed predominantly in roots.

It is found in the membrane. In terms of biological role, glutamate-gated receptor that probably acts as a non-selective cation channel. May be involved in light-signal transduction and calcium homeostasis via the regulation of calcium influx into cells. The polypeptide is Glutamate receptor 2.2 (GLR2.2) (Arabidopsis thaliana (Mouse-ear cress)).